The chain runs to 93 residues: MADITDIKAILYTEKTIELQENGVIVVQTSPRMTKNGLKEVFKEYFGVTPSKVNSLRQDGKVKRFRGKIGKRADFKKFYVTLPEGAAIANLSA.

The protein belongs to the universal ribosomal protein uL23 family. In terms of assembly, part of the 50S ribosomal subunit. Contacts protein L29, and trigger factor when it is bound to the ribosome.

Functionally, one of the early assembly proteins it binds 23S rRNA. One of the proteins that surrounds the polypeptide exit tunnel on the outside of the ribosome. Forms the main docking site for trigger factor binding to the ribosome. In Aliarcobacter butzleri (strain RM4018) (Arcobacter butzleri), this protein is Large ribosomal subunit protein uL23.